The sequence spans 150 residues: UPF0208 membrane protein VC_1099 (150 aa).

Transmembrane regions (helical) follow at residues Phe-42–Ala-62 and Ala-70–His-90.

This sequence belongs to the UPF0208 family.

Its subcellular location is the cell inner membrane. In Vibrio cholerae serotype O1 (strain ATCC 39315 / El Tor Inaba N16961), this protein is UPF0208 membrane protein VC_1099.